The chain runs to 196 residues: Dephospho-CoA kinase (196 aa).

The region spanning 5-196 is the DPCK domain; that stretch reads IIGLTGGIAT…QVDIALNFEL (192 aa). Position 13-18 (13-18) interacts with ATP; sequence ATGKTT.

It belongs to the CoaE family.

It is found in the cytoplasm. The enzyme catalyses 3'-dephospho-CoA + ATP = ADP + CoA + H(+). Its pathway is cofactor biosynthesis; coenzyme A biosynthesis; CoA from (R)-pantothenate: step 5/5. In terms of biological role, catalyzes the phosphorylation of the 3'-hydroxyl group of dephosphocoenzyme A to form coenzyme A. The chain is Dephospho-CoA kinase from Trichormus variabilis (strain ATCC 29413 / PCC 7937) (Anabaena variabilis).